The primary structure comprises 481 residues: Argininosuccinate lyase (481 aa).

The protein belongs to the lyase 1 family. Argininosuccinate lyase subfamily.

It localises to the cytoplasm. It carries out the reaction 2-(N(omega)-L-arginino)succinate = fumarate + L-arginine. The protein operates within amino-acid biosynthesis; L-arginine biosynthesis; L-arginine from L-ornithine and carbamoyl phosphate: step 3/3. The polypeptide is Argininosuccinate lyase (Methanococcus maripaludis (strain C7 / ATCC BAA-1331)).